A 227-amino-acid chain; its full sequence is Octanoyltransferase (227 aa).

In terms of domain architecture, BPL/LPL catalytic spans 31–209 (ANTIDEIWLV…VFLSLLGGTN (179 aa)). Substrate-binding positions include 71–78 (RGGKITYH), 139–141 (SIG), and 152–154 (GLA). The Acyl-thioester intermediate role is filled by C170.

Belongs to the LipB family.

Its subcellular location is the cytoplasm. The enzyme catalyses octanoyl-[ACP] + L-lysyl-[protein] = N(6)-octanoyl-L-lysyl-[protein] + holo-[ACP] + H(+). It functions in the pathway protein modification; protein lipoylation via endogenous pathway; protein N(6)-(lipoyl)lysine from octanoyl-[acyl-carrier-protein]: step 1/2. Its function is as follows. Catalyzes the transfer of endogenously produced octanoic acid from octanoyl-acyl-carrier-protein onto the lipoyl domains of lipoate-dependent enzymes. Lipoyl-ACP can also act as a substrate although octanoyl-ACP is likely to be the physiological substrate. This chain is Octanoyltransferase, found in Baumannia cicadellinicola subsp. Homalodisca coagulata.